The primary structure comprises 351 residues: Photosystem II D2 protein (351 aa).

The chain crosses the membrane as a helical span at residues 39–59; the sequence is TAYLAIGGWLTGTTFVTSWYT. Chlorophyll a is bound at residue His116. A helical membrane pass occupies residues 123–139; it reads GFMLRQFEIARLVGIRP. Positions 128 and 141 each coordinate pheophytin a. Residues 151-164 traverse the membrane as a helical segment; the sequence is VFVSVFLMYPLGQS. A chlorophyll a-binding site is contributed by His196. The chain crosses the membrane as a helical span at residues 206–226; the sequence is GALLCAIHGATVENTLFEDGE. The a plastoquinone site is built by His213 and Phe260. Position 213 (His213) interacts with Fe cation. Fe cation is bound at residue His267. The helical transmembrane segment at 277-293 threads the bilayer; sequence GLWTSSIGIIGLALNLR.

The protein belongs to the reaction center PufL/M/PsbA/D family. As to quaternary structure, PSII is composed of 1 copy each of membrane proteins PsbA, PsbB, PsbC, PsbD, PsbE, PsbF, PsbH, PsbI, PsbJ, PsbK, PsbL, PsbM, PsbT, PsbX, PsbY, PsbZ, Psb30/Ycf12, peripheral proteins PsbO, CyanoQ (PsbQ), PsbU, PsbV and a large number of cofactors. It forms dimeric complexes. It depends on The D1/D2 heterodimer binds P680, chlorophylls that are the primary electron donor of PSII, and subsequent electron acceptors. It shares a non-heme iron and each subunit binds pheophytin, quinone, additional chlorophylls, carotenoids and lipids. There is also a Cl(-1) ion associated with D1 and D2, which is required for oxygen evolution. The PSII complex binds additional chlorophylls, carotenoids and specific lipids. as a cofactor.

It is found in the cellular thylakoid membrane. The catalysed reaction is 2 a plastoquinone + 4 hnu + 2 H2O = 2 a plastoquinol + O2. Its function is as follows. Photosystem II (PSII) is a light-driven water:plastoquinone oxidoreductase that uses light energy to abstract electrons from H(2)O, generating O(2) and a proton gradient subsequently used for ATP formation. It consists of a core antenna complex that captures photons, and an electron transfer chain that converts photonic excitation into a charge separation. The D1/D2 (PsbA/PsbD) reaction center heterodimer binds P680, the primary electron donor of PSII as well as several subsequent electron acceptors. D2 is needed for assembly of a stable PSII complex. This Parasynechococcus marenigrum (strain WH8102) protein is Photosystem II D2 protein.